Here is a 743-residue protein sequence, read N- to C-terminus: Ovocleidin-116 (743 aa).

An N-terminal signal peptide occupies residues 1–18 (MRATLFCLCLCLLGTVLP). A disulfide bond links Cys-31 and Cys-42. Residue Asn-62 is glycosylated (N-linked (GlcNAc...) asparagine). Residues 68 to 225 (KEEGDHQGTI…GTMGTGDSAI (158 aa)) are disordered. Over residues 129 to 141 (DSNSVYPTSTSVE) the composition is skewed to polar residues. Over residues 169–179 (GPHGDGDGGNG) the composition is skewed to gly residues. Asn-293 is a glycosylation site (N-linked (GlcNAc...) asparagine; partial). Disordered regions lie at residues 333–356 (GDSVTSRPVGHPSVGNSGDGATEI), 385–454 (SGKG…GPER), 505–534 (ARTQPEVASAPSTVGKAAPERHRNRAQQEV), 549–577 (RHRARVRPESARLGQAARPEVAPAPSTGG), 628–649 (DPWVWGSAHPQAQHTRGSTVAG), and 692–743 (SGVG…RQSL). Over residues 402–420 (ATMTTRGGRGTASSGLTTG) the composition is skewed to low complexity. Positions 421–431 (DCSTAASTPSR) are enriched in polar residues. Basic and acidic residues predominate over residues 549–558 (RHRARVRPES).

It belongs to the osteoregulin family. Post-translationally, asn-62 is fully glycosylated, whereas only less than 10% of Asn-293 seem to be glycosylated. In the eggshell, expressed mainly in the palisade and mammillary layers. Expression also detected in the hypertrophic zone of the epiphyseal growth plate, and in cortical and medullary bone (at protein level). Highly expressed in uterus. Not detected in the proximal oviduct, liver, magnum, duodenum and kidney.

The protein resides in the secreted. Its subcellular location is the extracellular space. It is found in the extracellular matrix. Major component of the eggshell matrix. May play an important role in the regulation of calcite growth during eggshell calcification. May also regulate the mineralization process in developing and growing bones. This chain is Ovocleidin-116, found in Gallus gallus (Chicken).